A 930-amino-acid chain; its full sequence is MSKKRLYEIAKELGKESKEVVARAKELGLDVKSHSSSVEEAVAAKIAASFKPAAAPKVEAKPAAPKVSAEKKAEKSEPAKPAVAKEEAKPAEPVAPKTEKVAVKPQSRNFKAEREARAKEQAERRKQNKGNNRDQQQNGNRQKNDGRNGGKQGQSNRDNRRFNDQAKKQQGQQKRRNERRQQEDKRSNQAAPRIDFKARAAALKAEQNAEYARSSEERFKQYQAAKEALAQANKRKEPEEIFEEAAKLAEQAQQVQAVVEVVPEKKEPAVDTRRKKQARPDKNRDDYDHEEDGPRKQQKNRSSQNQVRNQKNSNWNNNKKNKKGNNKNNRNQTPKPVTERKFHELPTEFEYTDGMTVAEIAKRIKREPAEIVKKLFMMGVMATQNQSLDGETIELLMVDYGIEAKQKVEVDNADIERFFVEDGYLNEDELVERPPVVTIMGHVDHGKTTLLDTLRNSRVATGEAGGITQHIGAYQIVENGKKITFLDTPGHAAFTSMRARGASVTDITILVVAADDGVMPQTIEAINHSKAANVPIIVAINKIDKPGANPERVIGELAEHGVMSTAWGGDSEFVEISAKFNQNIEELLETVLLVAEIQELKADPTVRAIGTVIEARLDKGKGAVATLLVQQGTLNVQDPIVVGNTFGRVRAMTNDLGRRVKVAGPSTPVSITGLNEAPMAGDHFAVYEDEKSARAAGEERAKRALMKQRQATQRVSLENLFDTLKAGELKSVNVIIKADVQGSVEALSASLQKIDVEGVKVTIVHSAVGAINESDVTLAEASNAFIVGFNVRPTPQARQQAEADDVEIRLHSIIYKVIEEMEEAMKGMLDSEFEEKVIGEAVIRETFKVSKVGTIGGFMVINGKVARDSKVRVIRDGVVIYDGELASLKHYKDDVKEVTNGREGGLMIDGYNDIKMDDVIEAYVMEEIKR.

A compositionally biased stretch (low complexity) spans 50 to 67 (FKPAAAPKVEAKPAAPKV). 2 disordered regions span residues 50 to 217 (FKPA…SSEE) and 260 to 346 (EVVP…HELP). 2 stretches are compositionally biased toward basic and acidic residues: residues 68–90 (SAEK…EAKP) and 110–125 (FKAE…AERR). Residues 129 to 141 (KGNNRDQQQNGNR) show a composition bias toward low complexity. Basic and acidic residues-rich tracts occupy residues 157-167 (RDNRRFNDQAK) and 262-295 (VPEK…DGPR). Low complexity predominate over residues 309 to 318 (NQKNSNWNNN). Over residues 337–346 (VTERKFHELP) the composition is skewed to basic and acidic residues. The tr-type G domain maps to 432–599 (ERPPVVTIMG…TVLLVAEIQE (168 aa)). A G1 region spans residues 441 to 448 (GHVDHGKT). 441–448 (GHVDHGKT) contributes to the GTP binding site. The tract at residues 466-470 (GITQH) is G2. The interval 487-490 (DTPG) is G3. GTP-binding positions include 487–491 (DTPGH) and 541–544 (NKID). The tract at residues 541 to 544 (NKID) is G4. Residues 577 to 579 (SAK) form a G5 region.

This sequence belongs to the TRAFAC class translation factor GTPase superfamily. Classic translation factor GTPase family. IF-2 subfamily.

The protein localises to the cytoplasm. One of the essential components for the initiation of protein synthesis. Protects formylmethionyl-tRNA from spontaneous hydrolysis and promotes its binding to the 30S ribosomal subunits. Also involved in the hydrolysis of GTP during the formation of the 70S ribosomal complex. This is Translation initiation factor IF-2 from Streptococcus pneumoniae (strain ATCC 700669 / Spain 23F-1).